The chain runs to 149 residues: Transcriptional repressor NrdR (149 aa).

A zinc finger lies at C3–C34. Residues P49–E139 form the ATP-cone domain.

The protein belongs to the NrdR family. Requires Zn(2+) as cofactor.

Functionally, negatively regulates transcription of bacterial ribonucleotide reductase nrd genes and operons by binding to NrdR-boxes. The protein is Transcriptional repressor NrdR of Actinobacillus pleuropneumoniae serotype 3 (strain JL03).